A 331-amino-acid polypeptide reads, in one-letter code: MGSSQGSTLSADVMSLVDTLPVLAKTLIAGGAAGAIAKTAVAPLERIKILLQTRTNDFKTLGVSQSLKKVLQFDGPLGFYKGNGASVIRIIPYAALHYMTYEVYRDWILEKNLPLGSGPIVDLVAGSAAGGTAVLCTYPLDLARTKLAYQVSDTRQSLRGGANGFYRQPTYSGIKEVLAMAYKEGGPRGLYRGIGPTLIGILPYAGLKFYIYEELKRHVPEEHQNSVRMHLPCGALAGLFGQTITYPLDVVRRQMQVENLQPMTSEGNNKRYKNTFDGLNTIVRTQGWKQLFAGLSINYIKIVPSVAIGFTVYESMKSWMRIPPRERSKPA.

The next 6 helical transmembrane spans lie at 16–36 (LVDT…AGAI), 79–99 (FYKG…LHYM), 123–143 (LVAG…LDLA), 193–213 (GIGP…YIYE), 231–251 (LPCG…LDVV), and 292–312 (FAGL…GFTV). Solcar repeat units lie at residues 21–107 (PVLA…YRDW), 117–218 (SGPI…LKRH), and 225–319 (NSVR…MKSW).

The protein belongs to the mitochondrial carrier (TC 2.A.29) family. In terms of tissue distribution, expressed throughout the plant.

Its subcellular location is the mitochondrion inner membrane. Required for the accumulation of coenzyme A in the mitochondrial matrix. This is Mitochondrial carrier protein CoAc1 from Arabidopsis thaliana (Mouse-ear cress).